The chain runs to 255 residues: Indole-3-glycerol phosphate synthase (255 aa).

Belongs to the TrpC family.

The catalysed reaction is 1-(2-carboxyphenylamino)-1-deoxy-D-ribulose 5-phosphate + H(+) = (1S,2R)-1-C-(indol-3-yl)glycerol 3-phosphate + CO2 + H2O. The protein operates within amino-acid biosynthesis; L-tryptophan biosynthesis; L-tryptophan from chorismate: step 4/5. The chain is Indole-3-glycerol phosphate synthase from Streptococcus gordonii (strain Challis / ATCC 35105 / BCRC 15272 / CH1 / DL1 / V288).